A 1368-amino-acid chain; its full sequence is MSGESMLNRRIRKQFGKLDKIVEIPDLIGMQKESYGRFLQQGVPPEKREKIGLQAIFQSVFPIKDFTKSASLEFVSYSFGGVKHSVAECIQRGMTYEIPVRIRVRLVVYDMDETSGTSSIRDIKEQEIYFGAIPLMTDNGTFIINGTERVVVSQLHRSSGIFFDHDQGKTHSSGKVVYSSRIIPVRGSWIDIEIDPKDIVHMRIDRRRKFPGTILFKALGYTVKDILDYFYTKERVFVRKKKVFKAFSEDSLRGQRATVRIKHPETGDLIVDKGRIFNKTVLKNMKSAGIDMVPIRPEDVVGAVLAAPLADSSTGEMLADAGDFISEEVFERIGELGIEELQILFIDGAGSTDSIVKTLLLDKVNTKEEALIDIYRRIRPGNPATPEVAQDFIDHLFFKPDYYDLSAVGRLKLNHRLGANAPVSLRTLRREDLLLAVKTLIHLKNTQGPVDDIDHLGNRRVRAVGELLENQYRIGLVRMERAIKERMSLQEVDALMPHDLINPKPVSAVVREFFGTSQLSQFMDQTNPLSETTHKRRLSALGPGGLTRERAGFEVRDVHPSHYGRICPIETPEGPNIGLIVSLSTYARVNGYGFIETPYRVVKDTKVSKEIKMLPAFEEGEHPIAQANAPIGKDGRYVNPVVIARVAGEFSMIKASDVELMDVSPNQLVSVSASLIPFLENDDANRALMGSNMQRQSVPLARTSAPLVGTGVEKVVARDSGVAVVARRPGEVVYVDSGRIVVRHDTDDKDPEAKPVTVYNLSKFIRSNQNTCFNHRPIVKKGQRVAPGDVLADGPATEKGELALGKNVTVAFMPWGGYNFEDSILVGETLVRDGVFTSIHIEEFEVVARDTKLGKEEITCDIPNVGEESLVDLDESGIVRLGAEVKPGDVLVGKITPKGETQLSPEEKLLRAIFGEKGGNVKDTSLRVPPGVSGTVIDAKVFTRRGVEKDTRTRMIEEEEIRVLEKNRDDEIAVIEEVTRERLKALLTGQKCDTPVKKGKKTILAKGDKITAALFDEVPTSQFEKLAVTSDSVTEQAHRVFEWYRTQVDACREEFEARISRYGAGEELPPGVIKMVKVYVAMKRVLSTGDKMAGRHGNKGVVSRILPQEDLPYFEDGTTVDMVLNPLGVPSRMNVGQILEIHLGRAARVLGDQISTMLEEKKYKDLKKKLSAVFNKEIPAAEIEAMSSARLCEFASEYKDGVHMETPVFDGAKEAEIKALLKEGGADETGQAILYDGRTGQPFDERITVGTMYMLKLHHLVDDKLHARSIGPYSLVTQQPLGGKAQFGGQRLGEMEVWAMEAYGAAYALQEFLTVKSDDIAGRTRMYEKIVKGQNVLDPGIPESFKVLTKEMKALGLDVTLIEQQDKE.

Belongs to the RNA polymerase beta chain family. In terms of assembly, the RNAP catalytic core consists of 2 alpha, 1 beta, 1 beta' and 1 omega subunit. When a sigma factor is associated with the core the holoenzyme is formed, which can initiate transcription.

The catalysed reaction is RNA(n) + a ribonucleoside 5'-triphosphate = RNA(n+1) + diphosphate. DNA-dependent RNA polymerase catalyzes the transcription of DNA into RNA using the four ribonucleoside triphosphates as substrates. The polypeptide is DNA-directed RNA polymerase subunit beta (Desulfosudis oleivorans (strain DSM 6200 / JCM 39069 / Hxd3) (Desulfococcus oleovorans)).